Reading from the N-terminus, the 266-residue chain is UPF0328 protein ECU03_0130 (266 aa).

Belongs to the UPF0328 family.

The polypeptide is UPF0328 protein ECU03_0130 (Encephalitozoon cuniculi (strain GB-M1) (Microsporidian parasite)).